Reading from the N-terminus, the 343-residue chain is L-threonine 3-dehydrogenase (343 aa).

Cys38 is a Zn(2+) binding site. Residues Thr40 and His43 each act as charge relay system in the active site. 6 residues coordinate Zn(2+): His63, Glu64, Cys93, Cys96, Cys99, and Cys107. NAD(+)-binding positions include Ile175, Asp195, Arg200, 262 to 264 (LGI), and 286 to 287 (IY).

This sequence belongs to the zinc-containing alcohol dehydrogenase family. As to quaternary structure, homotetramer. The cofactor is Zn(2+).

The protein localises to the cytoplasm. The enzyme catalyses L-threonine + NAD(+) = (2S)-2-amino-3-oxobutanoate + NADH + H(+). The protein operates within amino-acid degradation; L-threonine degradation via oxydo-reductase pathway; glycine from L-threonine: step 1/2. Its function is as follows. Catalyzes the NAD(+)-dependent oxidation of L-threonine to 2-amino-3-ketobutyrate. The chain is L-threonine 3-dehydrogenase from Burkholderia mallei (strain NCTC 10247).